We begin with the raw amino-acid sequence, 452 residues long: Cell division protein FtsZ (452 aa).

GTP-binding positions include 24-28, 111-113, Glu142, Arg146, and Asp190; these read GAGSN and GTG.

It belongs to the FtsZ family. As to quaternary structure, homodimer. Polymerizes to form a dynamic ring structure in a strictly GTP-dependent manner. Interacts directly with several other division proteins.

It localises to the cytoplasm. Its function is as follows. Essential cell division protein that forms a contractile ring structure (Z ring) at the future cell division site. The regulation of the ring assembly controls the timing and the location of cell division. One of the functions of the FtsZ ring is to recruit other cell division proteins to the septum to produce a new cell wall between the dividing cells. Binds GTP and shows GTPase activity. In Rickettsia prowazekii (strain Madrid E), this protein is Cell division protein FtsZ.